A 243-amino-acid chain; its full sequence is Transcription factor TFIIS homolog (243 aa).

One can recognise a TFIIS central domain in the interval 77 to 201 (MRDIIQMMFF…SQQKVAEKTS (125 aa)). The TFIIS-type zinc finger occupies 202-242 (QLYKCPNCKQRMCTYREVQTRALDEPSTIFCTCKKCGHEFI). Zn(2+)-binding residues include C206, C209, C234, and C237.

It belongs to the TFS-II family.

Its function is as follows. Putative initiation factor. Necessary for efficient transcription elongation past template-encoded arresting sites. The sequence is that of Transcription factor TFIIS homolog from Ornithodoros (relapsing fever ticks).